Here is a 259-residue protein sequence, read N- to C-terminus: S-methyl-5'-thioadenosine phosphorylase (259 aa).

Phosphate is bound by residues Ser-9 and 50–51 (RH). Residue Met-175 coordinates substrate. Thr-176 contacts phosphate. Residue 199 to 201 (DLD) participates in substrate binding.

This sequence belongs to the PNP/MTAP phosphorylase family. MTAP subfamily. Homohexamer. Dimer of a homotrimer.

It carries out the reaction S-methyl-5'-thioadenosine + phosphate = 5-(methylsulfanyl)-alpha-D-ribose 1-phosphate + adenine. The protein operates within amino-acid biosynthesis; L-methionine biosynthesis via salvage pathway; S-methyl-5-thio-alpha-D-ribose 1-phosphate from S-methyl-5'-thioadenosine (phosphorylase route): step 1/1. Catalyzes the reversible phosphorylation of S-methyl-5'-thioadenosine (MTA) to adenine and 5-methylthioribose-1-phosphate. Involved in the breakdown of MTA, a major by-product of polyamine biosynthesis. Responsible for the first step in the methionine salvage pathway after MTA has been generated from S-adenosylmethionine. Has broad substrate specificity with 6-aminopurine nucleosides as preferred substrates. This Mycolicibacterium smegmatis (strain ATCC 700084 / mc(2)155) (Mycobacterium smegmatis) protein is S-methyl-5'-thioadenosine phosphorylase.